A 201-amino-acid polypeptide reads, in one-letter code: Pyridoxine/pyridoxamine 5'-phosphate oxidase (201 aa).

Residues 49 to 54 (RMVLLK), 64 to 65 (YT), Lys71, and Gln93 contribute to the FMN site. A substrate-binding site is contributed by Lys54. The substrate site is built by Tyr111, Arg115, and Ser119. Residues 128–129 (QS) and Trp172 contribute to the FMN site. 178-180 (RLH) lines the substrate pocket. Arg182 provides a ligand contact to FMN.

The protein belongs to the pyridoxamine 5'-phosphate oxidase family. As to quaternary structure, homodimer. The cofactor is FMN.

It carries out the reaction pyridoxamine 5'-phosphate + O2 + H2O = pyridoxal 5'-phosphate + H2O2 + NH4(+). The catalysed reaction is pyridoxine 5'-phosphate + O2 = pyridoxal 5'-phosphate + H2O2. It participates in cofactor metabolism; pyridoxal 5'-phosphate salvage; pyridoxal 5'-phosphate from pyridoxamine 5'-phosphate: step 1/1. The protein operates within cofactor metabolism; pyridoxal 5'-phosphate salvage; pyridoxal 5'-phosphate from pyridoxine 5'-phosphate: step 1/1. Functionally, catalyzes the oxidation of either pyridoxine 5'-phosphate (PNP) or pyridoxamine 5'-phosphate (PMP) into pyridoxal 5'-phosphate (PLP). This is Pyridoxine/pyridoxamine 5'-phosphate oxidase from Roseobacter denitrificans (strain ATCC 33942 / OCh 114) (Erythrobacter sp. (strain OCh 114)).